The sequence spans 117 residues: Large-conductance mechanosensitive channel (117 aa).

A run of 3 helical transmembrane segments spans residues 7–27 (EFAL…GAAF), 30–50 (IVTA…FGTV), and 64–84 (GMFV…FIFV).

It belongs to the MscL family. As to quaternary structure, homopentamer.

The protein localises to the cell membrane. Functionally, channel that opens in response to stretch forces in the membrane lipid bilayer. May participate in the regulation of osmotic pressure changes within the cell. The protein is Large-conductance mechanosensitive channel of Staphylococcus saprophyticus subsp. saprophyticus (strain ATCC 15305 / DSM 20229 / NCIMB 8711 / NCTC 7292 / S-41).